The following is a 307-amino-acid chain: Alginate lyase (307 aa).

The first 20 residues, 1–20, serve as a signal peptide directing secretion; sequence MLKSGVMVASLCLFSVPSRA.

This sequence belongs to the polysaccharide lyase 7 family.

Its subcellular location is the secreted. The catalysed reaction is Eliminative cleavage of alginate to give oligosaccharides with 4-deoxy-alpha-L-erythro-hex-4-enuronosyl groups at their non-reducing ends and beta-D-mannuronate at their reducing end.. Degrades alginates that contain guluronic acid. This is Alginate lyase (alyA) from Klebsiella pneumoniae.